A 514-amino-acid chain; its full sequence is ATP synthase subunit alpha (514 aa).

G170–T177 serves as a coordination point for ATP.

It belongs to the ATPase alpha/beta chains family. F-type ATPases have 2 components, CF(1) - the catalytic core - and CF(0) - the membrane proton channel. CF(1) has five subunits: alpha(3), beta(3), gamma(1), delta(1), epsilon(1). CF(0) has three main subunits: a(1), b(2) and c(9-12). The alpha and beta chains form an alternating ring which encloses part of the gamma chain. CF(1) is attached to CF(0) by a central stalk formed by the gamma and epsilon chains, while a peripheral stalk is formed by the delta and b chains.

It is found in the cell inner membrane. It carries out the reaction ATP + H2O + 4 H(+)(in) = ADP + phosphate + 5 H(+)(out). Produces ATP from ADP in the presence of a proton gradient across the membrane. The alpha chain is a regulatory subunit. This chain is ATP synthase subunit alpha, found in Pseudomonas savastanoi pv. phaseolicola (strain 1448A / Race 6) (Pseudomonas syringae pv. phaseolicola (strain 1448A / Race 6)).